The primary structure comprises 2167 residues: MSAAQGMAYKLRTDAAPTGAGRRARRSHSSVAAPYRAARLVQGGVSIEGGLVGGCQLTEERVAARPPRAAARDAEPVRPLSTLPESSIGLYDPSRERDSCGVGFVAELSGDYKRATVNDALEMLERMAHRGACGCEKNTGDGAGILVALPHNFFREVTKDAGFELPQPGEYAVGMVFLPIDEKRRERSKAEFQKVAESLGHVILGWRRVPTDNSDLGESALQTEPVIEQVFLTKSSSSEADFEQQLYILRRLSILSIRAALNLRRGGKRDFYMCSLSSRTIVYKGQLKPCQLKGYYYADLGHENFTSYMALVHSRFSTNTFPSWDRAQPMRVLGHNGEINTLKGNKNWMKAREGLLECEKLGLTKDQFSKILPIVDATSSDSGAFDGVLELLIRGGRSLPEAVMMMIPEAWQNDVNMEPEKKALYEFLSALMEPWDGPALISFTDGRYLGATLDRNGLRPGRFYVTHSGRVVMGSEVGVVDVPSKDVLRKGRLNPGMMLLVDFENHTVVDDEALKAQYSKAHPYGEWLKRQKIYLKDIVESVPETERVAPGISGSLTQKNEKKEHAGVNGIVTPLKAFGYTVEALEMLLLPMAKDGVEALGSMGNDTPLAVMSNREKLTFEYFKQMFAQVTNPPIDPIREKIVTSMECMIGPEGDLLETTEKQCNRLALEGPLVSIDEMEAIKKMNYRGWRSKVLDITYPKKSGRKGLEETLDRICTEARGAIKKGYTVLVLSDRGFSSDRVAVSSLLAVGAVHQHLVANLERTRVGLLVESAEPREVHHFCTLVGFGADAVCPYLAIEAIWCLQNDGKIPPNGDGKPYSKEELVKKYFYASNYGMMKVLAKMGISTLASYKGAQIFEALGLSSEVIRKCFDGTPSRIEGATFEMLARDALRLHELAFPSRAPPPGSADAKALPNPGDYHWRKNGEVHLNDPLAMAKLQEAARVNSRAAYKEYSRRIQELNKTCNLRGMLKFKDTADMISVDEVEPASEIVKRFVTGAMSYGSISLEAHTALAMAMNKLGGKSNTGEGGEQPSRMEPLANGSMNPKRSAIKQVASGRFGVSSYYLTNADELQIKMAQGAKPGEGGELPGHKVIGDIAVTRHSTAGVGLISPPPHHDIYSIEDLAQLIHDLKNSNPRARISVKLVSEAGVGVVASGVVKGHADHVLISGHDGGTGASRWTGIKNAGLPWELGLAETHQTLVANGLRGRAILQTDGQLKTGKDVAVACLLGAEEFGFSTAPLITLGCIMMRKCHTNTCPVGIATQDPVLREKFAGEPEHVINFFFMLAEELREIMSQLGFRTITEMVGRSDMLEVDPEVVKSNEKLENIDLSLILKPAAEIRPGAAQYCVEKQDHGLDMALDNKLIALSKAALEKEVRVFIETPIQNTNRAVGTMLSHEVTKRYHMKGLPAGTIHVKLTGSAGQSLGAFLCPGITLELEGDSNDYVGKGLSGGKIVVYPPRDSTFIPEDNIVIGNVALYGATIGEAYFNGMAAERFCVRNSGAQAVVEGIGDHGCEYMTGGTVVILGKTGRNFAAGMSGGIAYVYDIDGKFSVRCNHELVDLYHVEEEEDITTLKMMIEQHRLNTGSVVARDILSNFDTLLPKFVKVFPRDYKRVLDNMKAEKAAAKLAKEPKISNGVSVTTKKVQPEQSTNRPTRVSNAKKYRGFISYERESISYRDPNERVKDWKEVAIESVPGPLLNTQSARCMDCGTPFCHQESSGAGCPLGNKIPEFNELVHQNRWREALDRLLETNNFPEFTGRVCPAPCEGSCVLGIIENPVSIKSIECAIIDKGFEEGWMVPRPPLQRTGKKVAIIGSGPAGLAAADQLNKMGHFVTVFERADRIGGLMMYGVPNMKTDKIEIVQRRVNLMAEEGITFVVNANVGSDPLYSIERLRSENDAVILACGATKPRDLGIPGRELSGVHFAMEFLHANTKSLLDSNLEDGRYISAKGKKVVVIGGGDTGTDCIGTSIRHGCTSIVNLELLTKPPSKRAADNPWPQWPRIFRVDYGHQEASSKFGNDPRTYEVLTKRFIGDENGNVKALEVVRVKWEKVDGRFQFKEIEGSNETIEADLVLLAMGFLGPEATIAEKLGLEKDNRSNFKAQFGNFATSVDGIFAAGDCRRGQSLVVWAITEGRQAAAAVDKYLSRNEQDAAEDITPSGAGFVQPVAA.

A disordered region spans residues 1-31 (MSAAQGMAYKLRTDAAPTGAGRRARRSHSSV). The N-terminal 36 residues, 1–36 (MSAAQGMAYKLRTDAAPTGAGRRARRSHSSVAAPYR), are a transit peptide targeting the chloroplast. The active-site Nucleophile is the Cys100. The Glutamine amidotransferase type-2 domain occupies 100–504 (CGVGFVAELS…PGMMLLVDFE (405 aa)). The interval 1022–1042 (KSNTGEGGEQPSRMEPLANGS) is disordered. 1192–1249 (LAETHQTLVANGLRGRAILQTDGQLKTGKDVAVACLLGAEEFGFSTAPLITLGCIMMR) contacts FMN. Residues Cys1245, Cys1251, and Cys1256 each contribute to the [3Fe-4S] cluster site. 1956–1970 (GGGDTGTDCIGTSIR) is an NAD(+) binding site.

It belongs to the glutamate synthase family. As to quaternary structure, monomer. [3Fe-4S] cluster serves as cofactor. Requires FAD as cofactor. FMN is required as a cofactor. In terms of tissue distribution, highly expressed in roots.

It is found in the plastid. It localises to the chloroplast. The catalysed reaction is 2 L-glutamate + NAD(+) = L-glutamine + 2-oxoglutarate + NADH + H(+). Its pathway is amino-acid biosynthesis; L-glutamate biosynthesis via GLT pathway; L-glutamate from 2-oxoglutarate and L-glutamine (NAD(+) route): step 1/1. The protein operates within energy metabolism; nitrogen metabolism. Functionally, involved in glutamate biosynthesis and plays a major role in the primary ammonium ions assimilation in seedling roots. May be involved in the reutilization of glutamine in developing organs. Plays a role in the development of tillers. This chain is Glutamate synthase 1 [NADH], chloroplastic, found in Oryza sativa subsp. japonica (Rice).